The primary structure comprises 266 residues: Putative pyruvate, phosphate dikinase regulatory protein (266 aa).

Residue 147-154 coordinates ADP; the sequence is GLSRTSKT.

Belongs to the pyruvate, phosphate/water dikinase regulatory protein family. PDRP subfamily.

The catalysed reaction is N(tele)-phospho-L-histidyl/L-threonyl-[pyruvate, phosphate dikinase] + ADP = N(tele)-phospho-L-histidyl/O-phospho-L-threonyl-[pyruvate, phosphate dikinase] + AMP + H(+). It carries out the reaction N(tele)-phospho-L-histidyl/O-phospho-L-threonyl-[pyruvate, phosphate dikinase] + phosphate + H(+) = N(tele)-phospho-L-histidyl/L-threonyl-[pyruvate, phosphate dikinase] + diphosphate. Bifunctional serine/threonine kinase and phosphorylase involved in the regulation of the pyruvate, phosphate dikinase (PPDK) by catalyzing its phosphorylation/dephosphorylation. This is Putative pyruvate, phosphate dikinase regulatory protein from Clostridium perfringens (strain SM101 / Type A).